Reading from the N-terminus, the 125-residue chain is Small ribosomal subunit protein uS13 (125 aa).

A disordered region spans residues 94–125; the sequence is SLPVRGQRTQTNARTRKGKRKTVAGKKKAVKK. A compositionally biased stretch (basic residues) spans 107–125; that stretch reads RTRKGKRKTVAGKKKAVKK.

It belongs to the universal ribosomal protein uS13 family. Part of the 30S ribosomal subunit. Forms a loose heterodimer with protein S19. Forms two bridges to the 50S subunit in the 70S ribosome.

Functionally, located at the top of the head of the 30S subunit, it contacts several helices of the 16S rRNA. In the 70S ribosome it contacts the 23S rRNA (bridge B1a) and protein L5 of the 50S subunit (bridge B1b), connecting the 2 subunits; these bridges are implicated in subunit movement. Contacts the tRNAs in the A and P-sites. In Prosthecochloris aestuarii (strain DSM 271 / SK 413), this protein is Small ribosomal subunit protein uS13.